Consider the following 324-residue polypeptide: Olfactory receptor 51D1 (324 aa).

The Extracellular portion of the chain corresponds to 1-38 (MQKPQLLVPIIATSNGNLVHAAYFLLVGIPGLGPTIHF). A helical membrane pass occupies residues 39 to 59 (WLAFPLCFMYALATLGNLTIV). At 60-67 (LIIRVERR) the chain is on the cytoplasmic side. Residues 68–88 (LHEPMYLFLAMLSTIDLVLSS) traverse the membrane as a helical segment. Residues 89–112 (ITMPKMASLFLMGIQEIEFNICLA) are Extracellular-facing. Cysteines 110 and 202 form a disulfide. A helical transmembrane segment spans residues 113–133 (QMFLIHALSAVESAVLLAMAF). At 134–152 (DRFVAICHPLRHASVLTGC) the chain is on the cytoplasmic side. Residues 153-173 (TVAKIGLSALTRGFVFFFPLP) form a helical membrane-spanning segment. Residues 174–209 (FILKWLSYCQTHTVTHSFCLHQDIMKLSCTDTRVNV) lie on the Extracellular side of the membrane. Residues 210–230 (VYGLFIILSVMGVDSLFIGFS) traverse the membrane as a helical segment. The Cytoplasmic portion of the chain corresponds to 231–250 (YILILWAVLELSSRRAALKA). A helical membrane pass occupies residues 251–271 (FNTCISHLCAVLVFYVPLIGL). Topologically, residues 272–285 (SVVHRLGGPTSLLH) are extracellular. Residues 286–306 (VVMANTYLLLPPVVNPLVYGA) traverse the membrane as a helical segment. Over 307 to 324 (KTKEICSRVLCMFSQGGK) the chain is Cytoplasmic.

The protein belongs to the G-protein coupled receptor 1 family.

The protein resides in the cell membrane. In terms of biological role, odorant receptor. The polypeptide is Olfactory receptor 51D1 (OR51D1) (Homo sapiens (Human)).